A 230-amino-acid polypeptide reads, in one-letter code: Potassium/proton antiporter CemA (230 aa).

The next 4 helical transmembrane spans lie at 7 to 27 (LPSL…SSSF), 106 to 126 (IILH…SFFL), 145 to 165 (LNDS…VGFH), and 181 to 201 (FGWA…PVIL).

The protein belongs to the CemA family.

The protein localises to the plastid. It is found in the chloroplast inner membrane. It carries out the reaction K(+)(in) + H(+)(out) = K(+)(out) + H(+)(in). Its function is as follows. Contributes to K(+)/H(+) antiport activity by supporting proton efflux to control proton extrusion and homeostasis in chloroplasts in a light-dependent manner to modulate photosynthesis. Prevents excessive induction of non-photochemical quenching (NPQ) under continuous-light conditions. Indirectly promotes efficient inorganic carbon uptake into chloroplasts. The chain is Potassium/proton antiporter CemA from Hordeum vulgare (Barley).